A 354-amino-acid chain; its full sequence is Protein-glutamate methylesterase/protein-glutamine glutaminase (354 aa).

A Response regulatory domain is found at 7–124 (KVLCVDDSAL…REGMLEYTEM (118 aa)). Residue Asp58 is modified to 4-aspartylphosphate. Positions 156–348 (LLSSEKVIII…AALMKRAEAS (193 aa)) constitute a CheB-type methylesterase domain. Catalysis depends on residues Ser168, His194, and Asp290.

The protein belongs to the CheB family. Post-translationally, phosphorylated by CheA. Phosphorylation of the N-terminal regulatory domain activates the methylesterase activity.

The protein localises to the cytoplasm. It carries out the reaction [protein]-L-glutamate 5-O-methyl ester + H2O = L-glutamyl-[protein] + methanol + H(+). The catalysed reaction is L-glutaminyl-[protein] + H2O = L-glutamyl-[protein] + NH4(+). Its function is as follows. Involved in chemotaxis. Part of a chemotaxis signal transduction system that modulates chemotaxis in response to various stimuli. Catalyzes the demethylation of specific methylglutamate residues introduced into the chemoreceptors (methyl-accepting chemotaxis proteins or MCP) by CheR. Also mediates the irreversible deamidation of specific glutamine residues to glutamic acid. The protein is Protein-glutamate methylesterase/protein-glutamine glutaminase of Chromohalobacter salexigens (strain ATCC BAA-138 / DSM 3043 / CIP 106854 / NCIMB 13768 / 1H11).